The primary structure comprises 876 residues: Alanine--tRNA ligase (876 aa).

Lys74 bears the N6-acetyllysine mark. His564, His568, Cys666, and His670 together coordinate Zn(2+).

It belongs to the class-II aminoacyl-tRNA synthetase family. As to quaternary structure, homotetramer. The cofactor is Zn(2+).

It is found in the cytoplasm. The catalysed reaction is tRNA(Ala) + L-alanine + ATP = L-alanyl-tRNA(Ala) + AMP + diphosphate. Functionally, catalyzes the attachment of alanine to tRNA(Ala) in a two-step reaction: alanine is first activated by ATP to form Ala-AMP and then transferred to the acceptor end of tRNA(Ala). Also edits incorrectly charged Ser-tRNA(Ala) and Gly-tRNA(Ala) via its editing domain. This Shigella sonnei (strain Ss046) protein is Alanine--tRNA ligase.